Consider the following 98-residue polypeptide: NADH-ubiquinone oxidoreductase chain 4L (98 aa).

The next 3 helical transmembrane spans lie at 1 to 21 (MSLVYMNIMTAFMVALAGLLM), 29 to 49 (SLLCLEGMMLSLFVMASLTIL), and 59 to 79 (MPIILLVFAACEAALGLSLLV).

It belongs to the complex I subunit 4L family. As to quaternary structure, core subunit of respiratory chain NADH dehydrogenase (Complex I) which is composed of 45 different subunits.

The protein localises to the mitochondrion inner membrane. The enzyme catalyses a ubiquinone + NADH + 5 H(+)(in) = a ubiquinol + NAD(+) + 4 H(+)(out). Functionally, core subunit of the mitochondrial membrane respiratory chain NADH dehydrogenase (Complex I) which catalyzes electron transfer from NADH through the respiratory chain, using ubiquinone as an electron acceptor. Part of the enzyme membrane arm which is embedded in the lipid bilayer and involved in proton translocation. The protein is NADH-ubiquinone oxidoreductase chain 4L (MT-ND4L) of Cervus elaphus (Red deer).